A 90-amino-acid polypeptide reads, in one-letter code: Histone H1.M6.2 (90 aa).

The interval 1–90 (MSDAAVPPKK…KAVKKAPKKK (90 aa)) is disordered. Over residues 11 to 90 (ASPKKAAAKK…KAVKKAPKKK (80 aa)) the composition is skewed to basic residues.

The protein localises to the nucleus. It is found in the chromosome. The sequence is that of Histone H1.M6.2 from Trypanosoma cruzi.